The following is a 269-amino-acid chain: MTQATPQRIAIAGASGRMGQMLIEAVLDTEGVELAVALDRAGSPSIGQDAGAALGRPCGVTITDQLDALAQADCLIDFTRPEGTLQHLQACLRHDVKMVIGTTGFDSSGRAEIKVAAQKIAIVFAPNMSVGVNATLKLLDMAARILNSGYDVEIFEAHHRNKVDAPSGTALIMGETVASAWDVALPDVATWTRHGDTGVRKPGTIGFSVVRGGDIVGDHTVFFCGTGERIEISHRSSSRATYAQGAVRAARFLARQDNGLYDMQAVLGL.

Residues 13–18 and Asp-39 each bind NAD(+); that span reads GASGRM. Arg-40 contacts NADP(+). NAD(+) is bound by residues 101–103 and 125–128; these read GTT and APNM. The active-site Proton donor/acceptor is His-158. His-159 serves as a coordination point for (S)-2,3,4,5-tetrahydrodipicolinate. Catalysis depends on Lys-162, which acts as the Proton donor. 168–169 is a (S)-2,3,4,5-tetrahydrodipicolinate binding site; it reads GT.

The protein belongs to the DapB family.

Its subcellular location is the cytoplasm. It catalyses the reaction (S)-2,3,4,5-tetrahydrodipicolinate + NAD(+) + H2O = (2S,4S)-4-hydroxy-2,3,4,5-tetrahydrodipicolinate + NADH + H(+). The catalysed reaction is (S)-2,3,4,5-tetrahydrodipicolinate + NADP(+) + H2O = (2S,4S)-4-hydroxy-2,3,4,5-tetrahydrodipicolinate + NADPH + H(+). Its pathway is amino-acid biosynthesis; L-lysine biosynthesis via DAP pathway; (S)-tetrahydrodipicolinate from L-aspartate: step 4/4. In terms of biological role, catalyzes the conversion of 4-hydroxy-tetrahydrodipicolinate (HTPA) to tetrahydrodipicolinate. This chain is 4-hydroxy-tetrahydrodipicolinate reductase, found in Bordetella pertussis (strain Tohama I / ATCC BAA-589 / NCTC 13251).